The sequence spans 252 residues: Large ribosomal subunit protein uL4 (252 aa).

It belongs to the universal ribosomal protein uL4 family. In terms of assembly, part of the 50S ribosomal subunit.

In terms of biological role, one of the primary rRNA binding proteins, this protein initially binds near the 5'-end of the 23S rRNA. It is important during the early stages of 50S assembly. It makes multiple contacts with different domains of the 23S rRNA in the assembled 50S subunit and ribosome. Its function is as follows. Forms part of the polypeptide exit tunnel. The sequence is that of Large ribosomal subunit protein uL4 from Methanococcus maripaludis (strain C6 / ATCC BAA-1332).